Here is a 358-residue protein sequence, read N- to C-terminus: UDP-N-acetylglucosamine--N-acetylmuramyl-(pentapeptide) pyrophosphoryl-undecaprenol N-acetylglucosamine transferase (358 aa).

Positions 166, 196, and 291 each coordinate UDP-N-acetyl-alpha-D-glucosamine.

It belongs to the glycosyltransferase 28 family. MurG subfamily.

The protein localises to the cell membrane. The enzyme catalyses Mur2Ac(oyl-L-Ala-gamma-D-Glu-L-Lys-D-Ala-D-Ala)-di-trans,octa-cis-undecaprenyl diphosphate + UDP-N-acetyl-alpha-D-glucosamine = beta-D-GlcNAc-(1-&gt;4)-Mur2Ac(oyl-L-Ala-gamma-D-Glu-L-Lys-D-Ala-D-Ala)-di-trans,octa-cis-undecaprenyl diphosphate + UDP + H(+). It participates in cell wall biogenesis; peptidoglycan biosynthesis. In terms of biological role, cell wall formation. Catalyzes the transfer of a GlcNAc subunit on undecaprenyl-pyrophosphoryl-MurNAc-pentapeptide (lipid intermediate I) to form undecaprenyl-pyrophosphoryl-MurNAc-(pentapeptide)GlcNAc (lipid intermediate II). In Staphylococcus saprophyticus subsp. saprophyticus (strain ATCC 15305 / DSM 20229 / NCIMB 8711 / NCTC 7292 / S-41), this protein is UDP-N-acetylglucosamine--N-acetylmuramyl-(pentapeptide) pyrophosphoryl-undecaprenol N-acetylglucosamine transferase.